Reading from the N-terminus, the 63-residue chain is Large ribosomal subunit protein eL29 (63 aa).

Over residues M1–T26 the composition is skewed to basic residues. Positions M1 to V35 are disordered.

It belongs to the eukaryotic ribosomal protein eL29 family. Component of the large ribosomal subunit. Mature ribosomes consist of a small (40S) and a large (60S) subunit. The 40S subunit contains about 32 different proteins and 1 molecule of RNA (18S). The 60S subunit contains 45 different proteins and 3 molecules of RNA (25S, 5.8S and 5S).

The protein localises to the cytoplasm. Component of the ribosome, a large ribonucleoprotein complex responsible for the synthesis of proteins in the cell. The small ribosomal subunit (SSU) binds messenger RNAs (mRNAs) and translates the encoded message by selecting cognate aminoacyl-transfer RNA (tRNA) molecules. The large subunit (LSU) contains the ribosomal catalytic site termed the peptidyl transferase center (PTC), which catalyzes the formation of peptide bonds, thereby polymerizing the amino acids delivered by tRNAs into a polypeptide chain. The nascent polypeptides leave the ribosome through a tunnel in the LSU and interact with protein factors that function in enzymatic processing, targeting, and the membrane insertion of nascent chains at the exit of the ribosomal tunnel. The protein is Large ribosomal subunit protein eL29 of Candida albicans (strain SC5314 / ATCC MYA-2876) (Yeast).